Reading from the N-terminus, the 109-residue chain is Thiosulfate sulfurtransferase GlpE (109 aa).

Residues 16–104 (RSNGAVVVDI…WRATFPSETA (89 aa)) enclose the Rhodanese domain. Cysteine 64 acts as the Cysteine persulfide intermediate in catalysis.

Belongs to the GlpE family.

The protein localises to the cytoplasm. It catalyses the reaction thiosulfate + hydrogen cyanide = thiocyanate + sulfite + 2 H(+). The enzyme catalyses thiosulfate + [thioredoxin]-dithiol = [thioredoxin]-disulfide + hydrogen sulfide + sulfite + 2 H(+). Functionally, transferase that catalyzes the transfer of sulfur from thiosulfate to thiophilic acceptors such as cyanide or dithiols. May function in a CysM-independent thiosulfate assimilation pathway by catalyzing the conversion of thiosulfate to sulfite, which can then be used for L-cysteine biosynthesis. This is Thiosulfate sulfurtransferase GlpE from Ectopseudomonas mendocina (strain ymp) (Pseudomonas mendocina).